We begin with the raw amino-acid sequence, 491 residues long: Bifunctional protein GlmU (491 aa).

Residues 1–238 (MTTQPAVPAA…EWEIRGVNDR (238 aa)) are pyrophosphorylase. UDP-N-acetyl-alpha-D-glucosamine is bound by residues 14–17 (LAAG), Lys28, Gln81, 86–87 (GT), 110–112 (YGD), Gly149, Glu163, Asn178, and Asn236. Asp112 lines the Mg(2+) pocket. Asn236 is a Mg(2+) binding site. Residues 239–259 (AQLADLAAEANRRTLRRWMLA) are linker. Residues 260-491 (GVTIADPATT…TASTDREIQP (232 aa)) are N-acetyltransferase. UDP-N-acetyl-alpha-D-glucosamine-binding residues include Arg341 and Lys359. His371 acts as the Proton acceptor in catalysis. Tyr374 and Asn385 together coordinate UDP-N-acetyl-alpha-D-glucosamine. Residues Ala388, 394–395 (NY), Ser413, and Ala431 each bind acetyl-CoA. The segment at 460 to 491 (AKRPGTPAAEAAQRANDESTGTTASTDREIQP) is disordered.

It in the N-terminal section; belongs to the N-acetylglucosamine-1-phosphate uridyltransferase family. The protein in the C-terminal section; belongs to the transferase hexapeptide repeat family. In terms of assembly, homotrimer. Mg(2+) is required as a cofactor.

It is found in the cytoplasm. The enzyme catalyses alpha-D-glucosamine 1-phosphate + acetyl-CoA = N-acetyl-alpha-D-glucosamine 1-phosphate + CoA + H(+). It carries out the reaction N-acetyl-alpha-D-glucosamine 1-phosphate + UTP + H(+) = UDP-N-acetyl-alpha-D-glucosamine + diphosphate. It participates in nucleotide-sugar biosynthesis; UDP-N-acetyl-alpha-D-glucosamine biosynthesis; N-acetyl-alpha-D-glucosamine 1-phosphate from alpha-D-glucosamine 6-phosphate (route II): step 2/2. The protein operates within nucleotide-sugar biosynthesis; UDP-N-acetyl-alpha-D-glucosamine biosynthesis; UDP-N-acetyl-alpha-D-glucosamine from N-acetyl-alpha-D-glucosamine 1-phosphate: step 1/1. It functions in the pathway bacterial outer membrane biogenesis; LPS lipid A biosynthesis. Functionally, catalyzes the last two sequential reactions in the de novo biosynthetic pathway for UDP-N-acetylglucosamine (UDP-GlcNAc). The C-terminal domain catalyzes the transfer of acetyl group from acetyl coenzyme A to glucosamine-1-phosphate (GlcN-1-P) to produce N-acetylglucosamine-1-phosphate (GlcNAc-1-P), which is converted into UDP-GlcNAc by the transfer of uridine 5-monophosphate (from uridine 5-triphosphate), a reaction catalyzed by the N-terminal domain. In Kineococcus radiotolerans (strain ATCC BAA-149 / DSM 14245 / SRS30216), this protein is Bifunctional protein GlmU.